Reading from the N-terminus, the 245-residue chain is Aliphatic sulfonates import ATP-binding protein SsuB 1 (245 aa).

The ABC transporter domain maps to 9 to 227 (LDLVGIGHRY…HRGDAQLAAW (219 aa)). 41–48 (GPSGVGKS) lines the ATP pocket.

This sequence belongs to the ABC transporter superfamily. Aliphatic sulfonates importer (TC 3.A.1.17.2) family. In terms of assembly, the complex is composed of two ATP-binding proteins (SsuB), two transmembrane proteins (SsuC) and a solute-binding protein (SsuA).

It is found in the cell membrane. The enzyme catalyses ATP + H2O + aliphatic sulfonate-[sulfonate-binding protein]Side 1 = ADP + phosphate + aliphatic sulfonateSide 2 + [sulfonate-binding protein]Side 1.. Part of the ABC transporter complex SsuABC involved in aliphatic sulfonates import. Responsible for energy coupling to the transport system. The polypeptide is Aliphatic sulfonates import ATP-binding protein SsuB 1 (Rhodococcus jostii (strain RHA1)).